The sequence spans 71 residues: UPF0352 protein Ssed_1809 (71 aa).

Belongs to the UPF0352 family.

The sequence is that of UPF0352 protein Ssed_1809 from Shewanella sediminis (strain HAW-EB3).